Reading from the N-terminus, the 174-residue chain is Co-chaperone protein HscB (174 aa).

The J domain maps to 2 to 74 (DYFTLFGLPA…LKRAEYMLSL (73 aa)).

It belongs to the HscB family. As to quaternary structure, interacts with HscA and stimulates its ATPase activity. Interacts with IscU.

Its function is as follows. Co-chaperone involved in the maturation of iron-sulfur cluster-containing proteins. Seems to help targeting proteins to be folded toward HscA. In Yersinia pseudotuberculosis serotype O:1b (strain IP 31758), this protein is Co-chaperone protein HscB.